The sequence spans 444 residues: Phosphoglucosamine mutase (444 aa).

The Phosphoserine intermediate role is filled by Ser-101. Mg(2+) contacts are provided by Ser-101, Asp-240, Asp-242, and Asp-244. Phosphoserine is present on Ser-101.

The protein belongs to the phosphohexose mutase family. The cofactor is Mg(2+). Post-translationally, activated by phosphorylation.

It carries out the reaction alpha-D-glucosamine 1-phosphate = D-glucosamine 6-phosphate. Its function is as follows. Catalyzes the conversion of glucosamine-6-phosphate to glucosamine-1-phosphate. The protein is Phosphoglucosamine mutase of Aeromonas salmonicida (strain A449).